The sequence spans 132 residues: Small ribosomal subunit protein uS8 (132 aa).

The protein belongs to the universal ribosomal protein uS8 family. Part of the 30S ribosomal subunit. Contacts proteins S5 and S12.

In terms of biological role, one of the primary rRNA binding proteins, it binds directly to 16S rRNA central domain where it helps coordinate assembly of the platform of the 30S subunit. The sequence is that of Small ribosomal subunit protein uS8 from Agrobacterium fabrum (strain C58 / ATCC 33970) (Agrobacterium tumefaciens (strain C58)).